A 210-amino-acid chain; its full sequence is Thiamine-phosphate synthase (210 aa).

Residues 38-42 (QLREK) and Asn70 contribute to the 4-amino-2-methyl-5-(diphosphooxymethyl)pyrimidine site. Residues Asp71 and Asp90 each coordinate Mg(2+). Ser109 is a binding site for 4-amino-2-methyl-5-(diphosphooxymethyl)pyrimidine. 139-141 (TPT) is a binding site for 2-[(2R,5Z)-2-carboxy-4-methylthiazol-5(2H)-ylidene]ethyl phosphate. Residue Lys142 coordinates 4-amino-2-methyl-5-(diphosphooxymethyl)pyrimidine. 2-[(2R,5Z)-2-carboxy-4-methylthiazol-5(2H)-ylidene]ethyl phosphate is bound by residues Gly170 and 190–191 (VS).

It belongs to the thiamine-phosphate synthase family. It depends on Mg(2+) as a cofactor.

The enzyme catalyses 2-[(2R,5Z)-2-carboxy-4-methylthiazol-5(2H)-ylidene]ethyl phosphate + 4-amino-2-methyl-5-(diphosphooxymethyl)pyrimidine + 2 H(+) = thiamine phosphate + CO2 + diphosphate. It carries out the reaction 2-(2-carboxy-4-methylthiazol-5-yl)ethyl phosphate + 4-amino-2-methyl-5-(diphosphooxymethyl)pyrimidine + 2 H(+) = thiamine phosphate + CO2 + diphosphate. It catalyses the reaction 4-methyl-5-(2-phosphooxyethyl)-thiazole + 4-amino-2-methyl-5-(diphosphooxymethyl)pyrimidine + H(+) = thiamine phosphate + diphosphate. Its pathway is cofactor biosynthesis; thiamine diphosphate biosynthesis; thiamine phosphate from 4-amino-2-methyl-5-diphosphomethylpyrimidine and 4-methyl-5-(2-phosphoethyl)-thiazole: step 1/1. Its function is as follows. Condenses 4-methyl-5-(beta-hydroxyethyl)thiazole monophosphate (THZ-P) and 2-methyl-4-amino-5-hydroxymethyl pyrimidine pyrophosphate (HMP-PP) to form thiamine monophosphate (TMP). This is Thiamine-phosphate synthase from Leptospira biflexa serovar Patoc (strain Patoc 1 / Ames).